Consider the following 59-residue polypeptide: Large ribosomal subunit protein uL30 (59 aa).

Belongs to the universal ribosomal protein uL30 family. In terms of assembly, part of the 50S ribosomal subunit.

In Aeromonas hydrophila subsp. hydrophila (strain ATCC 7966 / DSM 30187 / BCRC 13018 / CCUG 14551 / JCM 1027 / KCTC 2358 / NCIMB 9240 / NCTC 8049), this protein is Large ribosomal subunit protein uL30.